Here is a 521-residue protein sequence, read N- to C-terminus: Bacillolysin (521 aa).

Residues Met1–Ala27 form the signal peptide. Positions Ala28–His221 are cleaved as a propeptide — activation peptide. Residue Asp360 coordinates Ca(2+). Residue His364 coordinates Zn(2+). Residue Glu365 is part of the active site. Zn(2+)-binding residues include His368 and Glu388. Ca(2+) contacts are provided by Asp399, Asp402, Asp404, and Glu407. His449 serves as the catalytic Proton donor.

The protein belongs to the peptidase M4 family. It depends on Ca(2+) as a cofactor. Zn(2+) serves as cofactor.

It is found in the secreted. The catalysed reaction is Similar, but not identical, to that of thermolysin.. In terms of biological role, extracellular zinc metalloprotease. This Bacillus subtilis subsp. amylosacchariticus protein is Bacillolysin (nprE).